Consider the following 136-residue polypeptide: Protein PsiE (136 aa).

4 helical membrane passes run 15 to 35, 55 to 75, 82 to 102, and 108 to 128; these read ILQN…VLFL, YELV…ALIV, FHFP…RLII, and PMDV…LWLC.

It belongs to the PsiE family.

The protein resides in the cell inner membrane. The chain is Protein PsiE from Salmonella arizonae (strain ATCC BAA-731 / CDC346-86 / RSK2980).